The chain runs to 195 residues: Endoribonuclease YbeY (195 aa).

Zn(2+) is bound by residues His152, His156, and His162.

Belongs to the endoribonuclease YbeY family. The cofactor is Zn(2+).

The protein resides in the cytoplasm. In terms of biological role, single strand-specific metallo-endoribonuclease involved in late-stage 70S ribosome quality control and in maturation of the 3' terminus of the 16S rRNA. The sequence is that of Endoribonuclease YbeY from Rhodopseudomonas palustris (strain HaA2).